Reading from the N-terminus, the 503-residue chain is Lysine--tRNA ligase (503 aa).

2 residues coordinate Mg(2+): Glu413 and Glu420.

This sequence belongs to the class-II aminoacyl-tRNA synthetase family. As to quaternary structure, homodimer. Mg(2+) is required as a cofactor.

It is found in the cytoplasm. The catalysed reaction is tRNA(Lys) + L-lysine + ATP = L-lysyl-tRNA(Lys) + AMP + diphosphate. This chain is Lysine--tRNA ligase, found in Actinobacillus succinogenes (strain ATCC 55618 / DSM 22257 / CCUG 43843 / 130Z).